The primary structure comprises 675 residues: DNA ligase (675 aa).

Residues 35-39 (DEAYD), 84-85 (SL), and glutamate 116 contribute to the NAD(+) site. Lysine 118 functions as the N6-AMP-lysine intermediate in the catalytic mechanism. The NAD(+) site is built by arginine 139, glutamate 180, lysine 296, and lysine 320. Positions 414, 417, 432, and 437 each coordinate Zn(2+). Residues 597 to 675 (PVDAFWNGKT…EREFLERLGM (79 aa)) enclose the BRCT domain.

It belongs to the NAD-dependent DNA ligase family. LigA subfamily. The cofactor is Mg(2+). Mn(2+) serves as cofactor.

The enzyme catalyses NAD(+) + (deoxyribonucleotide)n-3'-hydroxyl + 5'-phospho-(deoxyribonucleotide)m = (deoxyribonucleotide)n+m + AMP + beta-nicotinamide D-nucleotide.. Its function is as follows. DNA ligase that catalyzes the formation of phosphodiester linkages between 5'-phosphoryl and 3'-hydroxyl groups in double-stranded DNA using NAD as a coenzyme and as the energy source for the reaction. It is essential for DNA replication and repair of damaged DNA. The protein is DNA ligase of Syntrophobacter fumaroxidans (strain DSM 10017 / MPOB).